A 427-amino-acid chain; its full sequence is Serine--tRNA ligase (427 aa).

An L-serine-binding site is contributed by 231–233 (TAE). 262-264 (RSE) contributes to the ATP binding site. Glu-285 lines the L-serine pocket. 349 to 352 (EISS) serves as a coordination point for ATP. Ser-385 contributes to the L-serine binding site.

The protein belongs to the class-II aminoacyl-tRNA synthetase family. Type-1 seryl-tRNA synthetase subfamily. Homodimer. The tRNA molecule binds across the dimer.

The protein localises to the cytoplasm. The enzyme catalyses tRNA(Ser) + L-serine + ATP = L-seryl-tRNA(Ser) + AMP + diphosphate + H(+). It carries out the reaction tRNA(Sec) + L-serine + ATP = L-seryl-tRNA(Sec) + AMP + diphosphate + H(+). It participates in aminoacyl-tRNA biosynthesis; selenocysteinyl-tRNA(Sec) biosynthesis; L-seryl-tRNA(Sec) from L-serine and tRNA(Sec): step 1/1. Its function is as follows. Catalyzes the attachment of serine to tRNA(Ser). Is also able to aminoacylate tRNA(Sec) with serine, to form the misacylated tRNA L-seryl-tRNA(Sec), which will be further converted into selenocysteinyl-tRNA(Sec). The polypeptide is Serine--tRNA ligase (Listeria welshimeri serovar 6b (strain ATCC 35897 / DSM 20650 / CCUG 15529 / CIP 8149 / NCTC 11857 / SLCC 5334 / V8)).